The primary structure comprises 213 residues: Octanoyltransferase (213 aa).

A BPL/LPL catalytic domain is found at 32–207; that stretch reads ENSHDEIWLV…NILALLNNPP (176 aa). Residues 71-78, 138-140, and 151-153 each bind substrate; these read RGGQVTYH, SLG, and GLA. The Acyl-thioester intermediate role is filled by cysteine 169.

This sequence belongs to the LipB family.

It is found in the cytoplasm. The catalysed reaction is octanoyl-[ACP] + L-lysyl-[protein] = N(6)-octanoyl-L-lysyl-[protein] + holo-[ACP] + H(+). The protein operates within protein modification; protein lipoylation via endogenous pathway; protein N(6)-(lipoyl)lysine from octanoyl-[acyl-carrier-protein]: step 1/2. Catalyzes the transfer of endogenously produced octanoic acid from octanoyl-acyl-carrier-protein onto the lipoyl domains of lipoate-dependent enzymes. Lipoyl-ACP can also act as a substrate although octanoyl-ACP is likely to be the physiological substrate. This chain is Octanoyltransferase, found in Salmonella paratyphi A (strain ATCC 9150 / SARB42).